The primary structure comprises 398 residues: Protein ELC (398 aa).

A UEV domain is found at 18–162 (ALSQRGPSSV…ARDPPLYSRR (145 aa)). Positions 157 to 202 (PLYSRRRPQPPPPSPPTVYDSSLSRPPSADQSLPRPFPPSPYGGGV) are disordered. The segment covering 175-187 (YDSSLSRPPSADQ) has biased composition (polar residues). Positions 247–291 (EAEAEELLSLQAGLKRREDELNIGLKEMVEEKETLEQQLQIISMN) form a coiled coil. In terms of domain architecture, SB spans 322–390 (DTLSKQMLEC…RAAQMEVQVA (69 aa)).

The protein belongs to the ubiquitin-conjugating enzyme family. UEV subfamily. Component of the endosomal sorting required for transport complex I (ESCRT-I), composed of ELC, VPS28 and VPS37. Interacts with VPS28 and VPS37. Binds ubiquitin in vitro. Interacts with FREE1. Interacts with TOL9/TOM1D. Interacts with BRO1/ALIX. Interacts with SINAT1, SINAT2, SINAT3 and SINAT4. Ubiquitinated by SINAT1, SINAT2, SINAT3 and SINAT4 for subsequent proteasomal degradation. Expressed in roots, stems, leaves and flowers.

It is found in the early endosome. The protein resides in the late endosome. It localises to the prevacuolar compartment. Component of the ESCRT-I complex (endosomal sorting complex required for transport I), a regulator of vesicular trafficking process. Required for the sorting of endocytic ubiquitinated cargos into multivesicular bodies (MVBs). May control nuclear division through the microtubule cytoskeleton. This Arabidopsis thaliana (Mouse-ear cress) protein is Protein ELC.